A 473-amino-acid chain; its full sequence is L-seryl-tRNA(Sec) selenium transferase (473 aa).

Lys302 is subject to N6-(pyridoxal phosphate)lysine.

It belongs to the SelA family. It depends on pyridoxal 5'-phosphate as a cofactor.

Its subcellular location is the cytoplasm. It catalyses the reaction L-seryl-tRNA(Sec) + selenophosphate + H(+) = L-selenocysteinyl-tRNA(Sec) + phosphate. It functions in the pathway aminoacyl-tRNA biosynthesis; selenocysteinyl-tRNA(Sec) biosynthesis; selenocysteinyl-tRNA(Sec) from L-seryl-tRNA(Sec) (bacterial route): step 1/1. Its function is as follows. Converts seryl-tRNA(Sec) to selenocysteinyl-tRNA(Sec) required for selenoprotein biosynthesis. The sequence is that of L-seryl-tRNA(Sec) selenium transferase from Shewanella oneidensis (strain ATCC 700550 / JCM 31522 / CIP 106686 / LMG 19005 / NCIMB 14063 / MR-1).